The following is a 400-amino-acid chain: Large envelope protein (400 aa).

Met1 carries the N-acetylmethionine modification. A lipid anchor (N-myristoyl glycine; by host) is attached at Gly2. Positions 2-119 (GGWSSKPRQG…PPLRDSHPQA (118 aa)) are pre-S1. The pre-S stretch occupies residues 2–174 (GGWSSKPRQG…FSRIGDPALN (173 aa)). Residues 2-181 (GGWSSKPRQG…ALNMENITSG (180 aa)) lie on the Virion surface; in external conformation side of the membrane. At 2-253 (GGWSSKPRQG…PGYRWMCLRR (252 aa)) the chain is on the intravirion; in internal conformation side. Trp4 carries N-linked (GlcNAc...) asparagine glycosylation. The disordered stretch occupies residues 85–118 (LTTVPAAPPPASSNRQSGKQPTPISPPLRDSHPQ). Polar residues predominate over residues 96–106 (SSNRQSGKQPT). A pre-S2 region spans residues 120–174 (MQWNSTTFHQTLQDPRVRGLYFPAGGSSSGTVNPVPTTASPISSIFSRIGDPALN). The helical transmembrane segment at 182 to 202 (FLGPLLVLQAGFFLLTRILTI) threads the bilayer. Topologically, residues 203–253 (PQSLDSWWTSLNFLGGTTVCLGQNSQSPISNHSPTSCPPTCPGYRWMCLRR) are intravirion; in external conformation. The chain crosses the membrane as a helical span at residues 254-274 (FIIFLFILLLCLIFLLVLLDY). Over 275-348 (QGMLPVCPLI…WASARFSWLS (74 aa)) the chain is Virion surface. Asn320 carries an N-linked (GlcNAc...) asparagine; by host glycan. Residues 349–369 (LLVPFVQWFVGLSPTVWLSVI) traverse the membrane as a helical segment. At 370 to 375 (WMMWYW) the chain is on the intravirion side. The chain crosses the membrane as a helical span at residues 376-398 (GPSLYSILSPFLPLLPIFFCLWV). The Virion surface portion of the chain corresponds to 399–400 (YI).

Belongs to the orthohepadnavirus major surface antigen family. In its internal form (Li-HBsAg), interacts with the capsid protein and with the isoform S. Interacts with host chaperone CANX. As to quaternary structure, associates with host chaperone CANX through its pre-S2 N glycan; this association may be essential for isoform M proper secretion. In terms of assembly, interacts with isoform L. Interacts with the antigens of satellite virus HDV (HDVAgs); this interaction is required for encapsidation of HDV genomic RNA. In terms of processing, isoform M is N-terminally acetylated by host at a ratio of 90%, and N-glycosylated by host at the pre-S2 region. Myristoylated.

It localises to the virion membrane. The large envelope protein exists in two topological conformations, one which is termed 'external' or Le-HBsAg and the other 'internal' or Li-HBsAg. In its external conformation the protein attaches the virus to cell receptors and thereby initiating infection. This interaction determines the species specificity and liver tropism. This attachment induces virion internalization predominantly through caveolin-mediated endocytosis. The large envelope protein also assures fusion between virion membrane and endosomal membrane. In its internal conformation the protein plays a role in virion morphogenesis and mediates the contact with the nucleocapsid like a matrix protein. In terms of biological role, the middle envelope protein plays an important role in the budding of the virion. It is involved in the induction of budding in a nucleocapsid independent way. In this process the majority of envelope proteins bud to form subviral lipoprotein particles of 22 nm of diameter that do not contain a nucleocapsid. The polypeptide is Large envelope protein (Homo sapiens (Human)).